The primary structure comprises 32 residues: Kappa-theraphotoxin-Gr2b (32 aa).

Cystine bridges form between Cys2/Cys16, Cys9/Cys21, and Cys15/Cys25.

It belongs to the neurotoxin 30 (phrixotoxin) family. As to expression, expressed by the venom gland.

Its subcellular location is the secreted. Binds the voltage-sensor domain of the potassium channel KvAP (from the archaeon Aeropyrum pernix) and affects channel gating. In Grammostola rosea (Chilean rose tarantula), this protein is Kappa-theraphotoxin-Gr2b.